The sequence spans 28 residues: Ranatuerin-2BYb (28 aa).

The cysteines at positions 23 and 28 are disulfide-linked.

In terms of tissue distribution, expressed by the skin glands.

It localises to the secreted. Functionally, antibacterial activity against Gram-negative bacterium E.coli. Very weak hemolysis activity. The protein is Ranatuerin-2BYb of Rana boylii (Foothill yellow-legged frog).